Here is a 204-residue protein sequence, read N- to C-terminus: MTTFLQRDDFAVTARVLGALFYYSPESHETAPLVQALLNDDWQAQWPLDAEALAPVAAMFKTHSEESLPQAWQRLFIGPYALPSPPWGSVWLDRESVLFGDSTLALRQWMRENGIQFEMQQNEPEDHFGALLLLAAWLAENGRHHECEQLLAWHLFPWSPRFLDVFIDHAGHPFYQALGQLARLTLAQWQAQLIIPVAVKPLFR.

Belongs to the TorD/DmsD family. DmsD subfamily.

In terms of biological role, required for biogenesis/assembly of DMSO reductase, but not for the interaction of the DmsA signal peptide with the Tat system. May be part of a chaperone cascade complex that facilitates a folding-maturation pathway for the substrate protein. The sequence is that of Tat proofreading chaperone DmsD from Salmonella typhi.